The following is a 637-amino-acid chain: 1-deoxy-D-xylulose-5-phosphate synthase (637 aa).

Thiamine diphosphate contacts are provided by residues histidine 73 and 113 to 115 (SHA). Aspartate 145 serves as a coordination point for Mg(2+). Thiamine diphosphate contacts are provided by residues 146–147 (GA), asparagine 175, tyrosine 286, and glutamate 367. Residue asparagine 175 participates in Mg(2+) binding.

It belongs to the transketolase family. DXPS subfamily. As to quaternary structure, homodimer. Mg(2+) serves as cofactor. The cofactor is thiamine diphosphate.

The enzyme catalyses D-glyceraldehyde 3-phosphate + pyruvate + H(+) = 1-deoxy-D-xylulose 5-phosphate + CO2. It participates in metabolic intermediate biosynthesis; 1-deoxy-D-xylulose 5-phosphate biosynthesis; 1-deoxy-D-xylulose 5-phosphate from D-glyceraldehyde 3-phosphate and pyruvate: step 1/1. Catalyzes the acyloin condensation reaction between C atoms 2 and 3 of pyruvate and glyceraldehyde 3-phosphate to yield 1-deoxy-D-xylulose-5-phosphate (DXP). The polypeptide is 1-deoxy-D-xylulose-5-phosphate synthase (Thermobifida fusca (strain YX)).